The following is a 227-amino-acid chain: Cytidylate kinase (227 aa).

ATP is bound at residue 12–20; it reads GPSGAGKGT.

The protein belongs to the cytidylate kinase family. Type 1 subfamily.

The protein resides in the cytoplasm. The catalysed reaction is CMP + ATP = CDP + ADP. It catalyses the reaction dCMP + ATP = dCDP + ADP. The polypeptide is Cytidylate kinase (Salmonella arizonae (strain ATCC BAA-731 / CDC346-86 / RSK2980)).